Consider the following 101-residue polypeptide: Large ribosomal subunit protein uL23 (101 aa).

This sequence belongs to the universal ribosomal protein uL23 family. Part of the 50S ribosomal subunit. Contacts protein L29, and trigger factor when it is bound to the ribosome.

In terms of biological role, one of the early assembly proteins it binds 23S rRNA. One of the proteins that surrounds the polypeptide exit tunnel on the outside of the ribosome. Forms the main docking site for trigger factor binding to the ribosome. The sequence is that of Large ribosomal subunit protein uL23 from Corynebacterium diphtheriae (strain ATCC 700971 / NCTC 13129 / Biotype gravis).